Here is a 316-residue protein sequence, read N- to C-terminus: MNDVSKASLPKAIFLMGPTASGKTALAIELRKVLPVELISVDSALIYRGMDIGTAKPSADELKAAPHRLLNIRDPSQAYSAADFRRDALAQMAEITAAGRIPLLVGGTMLYFKALLEGLSPLPSADPEVRSRIEQQAAELGWELLHQQLQEIDPVAAARIHPNDPQRLSRALEVFFISGKTLTELTQTSGDALPYQVHQFAIAPASRELLHQRIELRFHQMLASGFEAEVRALFARGDLHTDLPSIRCVGYRQMWSYIEGEISYDEMVYRGVCATRQLAKRQMTWLRGWEGVRWLDSENPDRARKEVLQVVGAIAD.

ATP is bound at residue 17–24; sequence GPTASGKT. Residue 19 to 24 participates in substrate binding; it reads TASGKT. 3 interaction with substrate tRNA regions span residues 42–45, 166–170, and 247–252; these read DSAL, QRLSR, and RCVGYR.

This sequence belongs to the IPP transferase family. In terms of assembly, monomer. It depends on Mg(2+) as a cofactor.

It catalyses the reaction adenosine(37) in tRNA + dimethylallyl diphosphate = N(6)-dimethylallyladenosine(37) in tRNA + diphosphate. In terms of biological role, catalyzes the transfer of a dimethylallyl group onto the adenine at position 37 in tRNAs that read codons beginning with uridine, leading to the formation of N6-(dimethylallyl)adenosine (i(6)A). The sequence is that of tRNA dimethylallyltransferase from Salmonella arizonae (strain ATCC BAA-731 / CDC346-86 / RSK2980).